Reading from the N-terminus, the 331-residue chain is Heat-inducible transcription repressor HrcA (331 aa).

This sequence belongs to the HrcA family.

Functionally, negative regulator of class I heat shock genes (grpE-dnaK-dnaJ and groELS operons). Prevents heat-shock induction of these operons. This Synechococcus sp. (strain WH7803) protein is Heat-inducible transcription repressor HrcA.